We begin with the raw amino-acid sequence, 595 residues long: Alpha-1,3-galactosidase B (595 aa).

Positions 1-22 are cleaved as a signal peptide; sequence MKTILLFALSLLLSLSVSDVCA. 3 PbH1 repeats span residues 432–454, 455–477, and 488–541; these read TPEVLFAGNTIRNNRARGTLFST, PKKTVVEDNLFDHTSGTAILLCG, and CRDV…VIED.

This sequence belongs to the glycosyl hydrolase 110 family. B subfamily.

It carries out the reaction Hydrolysis of terminal, non-reducing branched (1-&gt;3)-alpha-D-galactosidic residues, producing free D-galactose.. The catalysed reaction is Hydrolysis of terminal, non-reducing linear (1-&gt;3)-alpha-D-galactosidic residues, producing free D-galactose.. It catalyses the reaction Hydrolysis of terminal, non-reducing alpha-D-galactose residues in alpha-D-galactosides, including galactose oligosaccharides, galactomannans and galactolipids.. Its function is as follows. Alpha-galactosidase. Removes both branched alpha-1,3-linked galactose residues of blood group B antigens and linear alpha-1,3-linked galactose structures. This is Alpha-1,3-galactosidase B (glaB) from Bacteroides fragilis (strain YCH46).